Here is a 132-residue protein sequence, read N- to C-terminus: Photosystem II extrinsic protein U (132 aa).

An N-terminal signal peptide occupies residues 1–29 (MKRLLSWLTGALVMAGLLSSLVLPSAVYA).

This sequence belongs to the PsbU family. PSII is composed of 1 copy each of membrane proteins PsbA, PsbB, PsbC, PsbD, PsbE, PsbF, PsbH, PsbI, PsbJ, PsbK, PsbL, PsbM, PsbT, PsbX, PsbY, PsbZ, Psb30/Ycf12, peripheral proteins PsbO, CyanoQ (PsbQ), PsbU, PsbV and a large number of cofactors. It forms dimeric complexes.

It localises to the cellular thylakoid membrane. In terms of biological role, one of the extrinsic, lumenal subunits of photosystem II (PSII). PSII is a light-driven water plastoquinone oxidoreductase, using light energy to abstract electrons from H(2)O, generating a proton gradient subsequently used for ATP formation. The extrinsic proteins stabilize the structure of photosystem II oxygen-evolving complex (OEC), the ion environment of oxygen evolution and protect the OEC against heat-induced inactivation. The chain is Photosystem II extrinsic protein U from Synechococcus sp. (strain CC9902).